The following is a 232-amino-acid chain: GFP-like non-fluorescent chromoprotein FP595 (232 aa).

The segment at residues 63 to 65 is a cross-link (2-iminomethyl-5-imidazolinone (Met-Gly)); it reads MYG. A (E)-2,3-didehydrotyrosine modification is found at tyrosine 64.

This sequence belongs to the GFP family. Post-translationally, contains a chromophore consisting of modified amino acid residues. The chromophore is formed by autocatalytic backbone condensation between Xaa-N and Gly-(N+2), oxidation of Tyr-(N+1) to didehydrotyrosine, and formation of a double bond to the alpha-amino nitrogen of residue Tyr-(N+1). Maturation of the chromophore requires nothing other than molecular oxygen. As to expression, tentacle tips.

Pigment protein that is intensely purple in color. This chain is GFP-like non-fluorescent chromoprotein FP595, found in Anemonia sulcata (Mediterranean snakelocks sea anemone).